The following is a 372-amino-acid chain: Chaperone protein DnaJ (372 aa).

Positions 5 to 70 (DFYEVLGVTK…QKRAAYDRYG (66 aa)) constitute a J domain. A CR-type zinc finger spans residues 129 to 207 (GKLASLTLPT…CGGAGRVTRE (79 aa)). Zn(2+)-binding residues include Cys-142, Cys-145, Cys-159, Cys-162, Cys-181, Cys-184, Cys-195, and Cys-198. 4 CXXCXGXG motif repeats span residues 142–149 (CEACDGTG), 159–166 (CPTCGGQG), 181–188 (CPQCHGRG), and 195–202 (CQACGGAG).

This sequence belongs to the DnaJ family. As to quaternary structure, homodimer. It depends on Zn(2+) as a cofactor.

The protein localises to the cytoplasm. Its function is as follows. Participates actively in the response to hyperosmotic and heat shock by preventing the aggregation of stress-denatured proteins and by disaggregating proteins, also in an autonomous, DnaK-independent fashion. Unfolded proteins bind initially to DnaJ; upon interaction with the DnaJ-bound protein, DnaK hydrolyzes its bound ATP, resulting in the formation of a stable complex. GrpE releases ADP from DnaK; ATP binding to DnaK triggers the release of the substrate protein, thus completing the reaction cycle. Several rounds of ATP-dependent interactions between DnaJ, DnaK and GrpE are required for fully efficient folding. Also involved, together with DnaK and GrpE, in the DNA replication of plasmids through activation of initiation proteins. This chain is Chaperone protein DnaJ, found in Beijerinckia indica subsp. indica (strain ATCC 9039 / DSM 1715 / NCIMB 8712).